A 348-amino-acid chain; its full sequence is Mitogen-activated protein kinase kinase 5 (348 aa).

Disordered stretches follow at residues 1-26 (MKPIQSPSGVASPMKNRLRKRPDLSL) and 35-54 (LAVPLPLPPPSSSSSAPASS). At S6 the chain carries Phosphoserine; by ASK7. Positions 70–325 (LERVNRIGSG…AQQLLQHPFI (256 aa)) constitute a Protein kinase domain. ATP-binding positions include 76–84 (IGSGAGGTV) and K99. D187 serves as the catalytic Proton acceptor. At T215 the chain carries Phosphothreonine. Position 221 is a phosphoserine; by ASK7 (S221). Residue S221 is modified to Phosphoserine. Residue T225 is modified to Phosphothreonine; by ASK7. R313 bears the ADP-ribosylarginine; by HopF2 mark.

It belongs to the protein kinase superfamily. STE Ser/Thr protein kinase family. MAP kinase kinase subfamily. As to quaternary structure, interacts with P.syringae type III effector HopF2. Interacts with BZR1. Interacts with MPK6 and MPK3. Interacts with RACK1A, RACK1B and RACK1C. Interacts with MAPKKK5 mainly in the cytosol. Binds to BASL. Interacts with MAPKKK20. Post-translationally, phosphorylation at Thr-215 and Ser-221 by MAP kinase kinase kinases positively regulates kinase activity. Phosphorylated by MAPKKK5 and MAPKKK20 in response to abscisic acid (ABA). In terms of processing, ADP-ribosylation at Arg-313 by P.syringae type III effector HopF2 reduces the ability of the protein to phosphorylate downstream MPK6. In terms of tissue distribution, expressed higher in stems and leaves than in flowers and roots.

The enzyme catalyses L-seryl-[protein] + ATP = O-phospho-L-seryl-[protein] + ADP + H(+). It carries out the reaction L-threonyl-[protein] + ATP = O-phospho-L-threonyl-[protein] + ADP + H(+). It catalyses the reaction L-tyrosyl-[protein] + ATP = O-phospho-L-tyrosyl-[protein] + ADP + H(+). Activated through serine and threonine phosphorylation by MEKK1 and MAPKKK20 in response to abscisic acid (ABA). Inhibited through phosphorylation by GSK3/Shaggy-like kinase ASKs. Inhibited through ADP-Ribosylation by P.syringae HopF2. Activated after high light stress. In terms of biological role, mitogen-activated protein kinase kinase (MAPKK) which regulates abscisic acid (ABA) responses in a MAPKKK20-MKK5-MPK6 cascade involved in root growth (e.g. root cell division and elongation) and stomatal response, probably via MAPK6 activation by protein phosphorylation. Involved in the second phase of hydrogen peroxide generation during hypersensitive response-like cell death. Involved in the innate immune MAP kinase signaling cascade (MEKK1, MKK4/MKK5 and MPK3/MPK6) downstream of bacterial flagellin receptor FLS2. Activates by phosphorylation the downstream MPK3 and MPK6. YDA-MKK4/MKK5-MPK3/MPK6 module regulates stomatal cell fate before the guard mother cell (GMC) is specified. This MAPK cascade also functions downstream of the ER receptor in regulating coordinated local cell proliferation, which shapes the morphology of plant organs. MKK4 and MKK5 participate in the regulation of floral organ abscission. Target of the Pseudomonas syringae type III effector HopF2, that inhibits the activation of the downstream MPK6 and PAMP-triggered immunity. Plays a critical role in high light stress tolerance by the mediation of the Cu/Zn SODs CSD1 and CSD2 gene expression. Phosphorylates BZR1 in vitro. In Arabidopsis thaliana (Mouse-ear cress), this protein is Mitogen-activated protein kinase kinase 5.